The following is a 146-amino-acid chain: Snaclec 1 (146 aa).

A signal peptide spans 1-23 (MGRFIFMSFGLLVVFLSLSGTGA). Disulfide bonds link Cys25–Cys36, Cys53–Cys142, and Cys119–Cys134. The 112-residue stretch at 32 to 143 (YEGHCYRVFQ…CSRTYSFVCK (112 aa)) folds into the C-type lectin domain.

This sequence belongs to the snaclec family. Heterodimer; disulfide-linked. As to expression, expressed by the venom gland.

Its subcellular location is the secreted. Its function is as follows. Interferes with one step of hemostasis (modulation of platelet aggregation, or coagulation cascade, for example). The protein is Snaclec 1 of Sistrurus catenatus edwardsii (Desert massasauga).